Here is a 238-residue protein sequence, read N- to C-terminus: Probable transcriptional regulatory protein SGO_0454 (238 aa).

This sequence belongs to the TACO1 family. YeeN subfamily.

It is found in the cytoplasm. This Streptococcus gordonii (strain Challis / ATCC 35105 / BCRC 15272 / CH1 / DL1 / V288) protein is Probable transcriptional regulatory protein SGO_0454.